Consider the following 708-residue polypeptide: Phosphate acetyltransferase (708 aa).

A phosphate acetyltransferase region spans residues 388–708 (EFCYNLKLLS…TIALTSIQSE (321 aa)).

This sequence in the N-terminal section; belongs to the CobB/CobQ family. The protein in the C-terminal section; belongs to the phosphate acetyltransferase and butyryltransferase family. In terms of assembly, homohexamer.

It is found in the cytoplasm. It carries out the reaction acetyl-CoA + phosphate = acetyl phosphate + CoA. The protein operates within metabolic intermediate biosynthesis; acetyl-CoA biosynthesis; acetyl-CoA from acetate: step 2/2. Functionally, involved in acetate metabolism. This chain is Phosphate acetyltransferase (pta), found in Buchnera aphidicola subsp. Acyrthosiphon pisum (strain APS) (Acyrthosiphon pisum symbiotic bacterium).